We begin with the raw amino-acid sequence, 239 residues long: Probable transcriptional regulatory protein Ajs_1898 (239 aa).

The segment at 1 to 21 is disordered; it reads MAGHSKWANIQHRKGRQDEKR.

This sequence belongs to the TACO1 family.

The protein localises to the cytoplasm. This is Probable transcriptional regulatory protein Ajs_1898 from Acidovorax sp. (strain JS42).